The chain runs to 199 residues: Imidazoleglycerol-phosphate dehydratase (199 aa).

It belongs to the imidazoleglycerol-phosphate dehydratase family.

The protein localises to the cytoplasm. The enzyme catalyses D-erythro-1-(imidazol-4-yl)glycerol 3-phosphate = 3-(imidazol-4-yl)-2-oxopropyl phosphate + H2O. The protein operates within amino-acid biosynthesis; L-histidine biosynthesis; L-histidine from 5-phospho-alpha-D-ribose 1-diphosphate: step 6/9. This Mesorhizobium japonicum (strain LMG 29417 / CECT 9101 / MAFF 303099) (Mesorhizobium loti (strain MAFF 303099)) protein is Imidazoleglycerol-phosphate dehydratase.